A 237-amino-acid chain; its full sequence is Probable transcriptional regulatory protein Mfl546 (237 aa).

The segment at 1 to 20 (MGRAHEVRAASMAKTAAKKS) is disordered. A compositionally biased stretch (low complexity) spans 9–20 (AASMAKTAAKKS).

Belongs to the TACO1 family.

The protein localises to the cytoplasm. The protein is Probable transcriptional regulatory protein Mfl546 of Mesoplasma florum (strain ATCC 33453 / NBRC 100688 / NCTC 11704 / L1) (Acholeplasma florum).